The sequence spans 541 residues: Chaperonin GroEL, cyanelle (541 aa).

ATP contacts are provided by residues 29-32 (TLGP), 86-90 (DGTTT), Gly-413, 479-481 (NAA), and Asp-495.

It belongs to the chaperonin (HSP60) family. In terms of assembly, forms a cylinder of 14 subunits composed of two heptameric rings stacked back-to-back. Interacts with the co-chaperonin GroES.

The protein localises to the plastid. Its subcellular location is the cyanelle. The enzyme catalyses ATP + H2O + a folded polypeptide = ADP + phosphate + an unfolded polypeptide.. Its function is as follows. Together with its co-chaperonin GroES, plays an essential role in assisting protein folding. The GroEL-GroES system forms a nano-cage that allows encapsulation of the non-native substrate proteins and provides a physical environment optimized to promote and accelerate protein folding. The protein is Chaperonin GroEL, cyanelle of Cyanophora paradoxa.